A 216-amino-acid polypeptide reads, in one-letter code: Large ribosomal subunit protein uL24m (216 aa).

Residues 1–9 (MRLTALLSM) constitute a mitochondrion transit peptide. In terms of domain architecture, KOW spans 56 to 89 (VVRGDTVEVLSGKEKGKQGKVAQVIRARNWVILE). The tract at residues 167–186 (PQQWKDGPKDTSPEDTLQKT) is disordered.

The protein belongs to the universal ribosomal protein uL24 family. In terms of assembly, component of the mitochondrial ribosome large subunit (39S) which comprises a 16S rRNA and about 50 distinct proteins.

The protein localises to the mitochondrion. The chain is Large ribosomal subunit protein uL24m (mrpl24) from Danio rerio (Zebrafish).